We begin with the raw amino-acid sequence, 200 residues long: NADH-quinone oxidoreductase subunit C (200 aa).

The protein belongs to the complex I 30 kDa subunit family. In terms of assembly, NDH-1 is composed of 14 different subunits. Subunits NuoB, C, D, E, F, and G constitute the peripheral sector of the complex.

It is found in the cell inner membrane. It catalyses the reaction a quinone + NADH + 5 H(+)(in) = a quinol + NAD(+) + 4 H(+)(out). Functionally, NDH-1 shuttles electrons from NADH, via FMN and iron-sulfur (Fe-S) centers, to quinones in the respiratory chain. The immediate electron acceptor for the enzyme in this species is believed to be ubiquinone. Couples the redox reaction to proton translocation (for every two electrons transferred, four hydrogen ions are translocated across the cytoplasmic membrane), and thus conserves the redox energy in a proton gradient. This Burkholderia ambifaria (strain MC40-6) protein is NADH-quinone oxidoreductase subunit C.